The sequence spans 274 residues: 2-dehydro-3-deoxyphosphooctonate aldolase (274 aa).

It belongs to the KdsA family.

The protein localises to the cytoplasm. It catalyses the reaction D-arabinose 5-phosphate + phosphoenolpyruvate + H2O = 3-deoxy-alpha-D-manno-2-octulosonate-8-phosphate + phosphate. Its pathway is carbohydrate biosynthesis; 3-deoxy-D-manno-octulosonate biosynthesis; 3-deoxy-D-manno-octulosonate from D-ribulose 5-phosphate: step 2/3. The protein operates within bacterial outer membrane biogenesis; lipopolysaccharide biosynthesis. This is 2-dehydro-3-deoxyphosphooctonate aldolase from Legionella pneumophila (strain Corby).